The following is a 406-amino-acid chain: Imidazolonepropionase (406 aa).

Residues H72 and H74 each contribute to the Fe(3+) site. Zn(2+) is bound by residues H72 and H74. The 4-imidazolone-5-propanoate site is built by R81, Y144, and H177. Residue Y144 participates in N-formimidoyl-L-glutamate binding. H242 serves as a coordination point for Fe(3+). Position 242 (H242) interacts with Zn(2+). Q245 serves as a coordination point for 4-imidazolone-5-propanoate. D317 is a Fe(3+) binding site. D317 contributes to the Zn(2+) binding site. 2 residues coordinate N-formimidoyl-L-glutamate: N319 and G321. Residue T322 coordinates 4-imidazolone-5-propanoate.

This sequence belongs to the metallo-dependent hydrolases superfamily. HutI family. Zn(2+) is required as a cofactor. It depends on Fe(3+) as a cofactor.

Its subcellular location is the cytoplasm. It carries out the reaction 4-imidazolone-5-propanoate + H2O = N-formimidoyl-L-glutamate. It participates in amino-acid degradation; L-histidine degradation into L-glutamate; N-formimidoyl-L-glutamate from L-histidine: step 3/3. Its function is as follows. Catalyzes the hydrolytic cleavage of the carbon-nitrogen bond in imidazolone-5-propanoate to yield N-formimidoyl-L-glutamate. It is the third step in the universal histidine degradation pathway. The chain is Imidazolonepropionase from Yersinia pseudotuberculosis serotype O:3 (strain YPIII).